The chain runs to 119 residues: SGSCEVKTCWKAMPPFRKVGNVLKEKFDGATEVEQRKTGSTKVLVPKNSQFKPHTDEDLVYLDSSPDFCDHDLKNGVLGTSGRHCNKTSKAIDGCELMCCGRGFHTDEVEVVERCSCKF.

Ser-1 is lipidated: O-palmitoleoyl serine; by PORCN. Disulfide bonds link Cys-69/Cys-100 and Cys-85/Cys-95. Residue Asn-86 is glycosylated (N-linked (GlcNAc...) asparagine).

The protein belongs to the Wnt family. Palmitoleoylation is required for efficient binding to frizzled receptors. Depalmitoleoylation leads to Wnt signaling pathway inhibition.

It localises to the secreted. The protein localises to the extracellular space. The protein resides in the extracellular matrix. In terms of biological role, ligand for members of the frizzled family of seven transmembrane receptors. Plays an important role in embryonic development. The protein is Protein Wnt-4 (WNT-4) of Sceloporus occidentalis (Western fence lizard).